Here is a 410-residue protein sequence, read N- to C-terminus: Arginine deiminase (410 aa).

Catalysis depends on C398, which acts as the Amidino-cysteine intermediate.

The protein belongs to the arginine deiminase family.

Its subcellular location is the cytoplasm. The enzyme catalyses L-arginine + H2O = L-citrulline + NH4(+). It functions in the pathway amino-acid degradation; L-arginine degradation via ADI pathway; carbamoyl phosphate from L-arginine: step 1/2. This chain is Arginine deiminase, found in Limosilactobacillus reuteri (strain DSM 20016) (Lactobacillus reuteri).